The primary structure comprises 328 residues: Phosphatidylglycerol--prolipoprotein diacylglyceryl transferase (328 aa).

Helical transmembrane passes span 15–35, 57–77, and 106–126; these read VIQG…ILIS, IFMF…STLV, and GMAI…TINT. Residue arginine 156 participates in a 1,2-diacyl-sn-glycero-3-phospho-(1'-sn-glycerol) binding. Transmembrane regions (helical) follow at residues 242-262 and 289-309; these read GFIF…IEYL and ISMG…WIIV.

The protein belongs to the Lgt family.

It localises to the cell inner membrane. The enzyme catalyses L-cysteinyl-[prolipoprotein] + a 1,2-diacyl-sn-glycero-3-phospho-(1'-sn-glycerol) = an S-1,2-diacyl-sn-glyceryl-L-cysteinyl-[prolipoprotein] + sn-glycerol 1-phosphate + H(+). The protein operates within protein modification; lipoprotein biosynthesis (diacylglyceryl transfer). In terms of biological role, catalyzes the transfer of the diacylglyceryl group from phosphatidylglycerol to the sulfhydryl group of the N-terminal cysteine of a prolipoprotein, the first step in the formation of mature lipoproteins. The sequence is that of Phosphatidylglycerol--prolipoprotein diacylglyceryl transferase from Borreliella burgdorferi (strain ZS7) (Borrelia burgdorferi).